Reading from the N-terminus, the 253-residue chain is Ribosome-inactivating protein saporin-9 (253 aa).

The active site involves E176.

It catalyses the reaction Endohydrolysis of the N-glycosidic bond at one specific adenosine on the 28S rRNA.. Functionally, ribosome-inactivating protein of type 1, inhibits protein synthesis in animal cells. This chain is Ribosome-inactivating protein saporin-9 (SAP9), found in Saponaria officinalis (Common soapwort).